Consider the following 434-residue polypeptide: MAQFDLTRINCQYLDRHLTFPLLEFLCGKEIYNQQDLLEYILDTVNKTNMIDYTMDTRKRLNLSQDMPDELVQRKSDVLATLKQLQNEVAPIMKATDILKNGESMKDSKTFVNALQKDYNFKVEHLESAYKLAKYLYECGNYQESTSYLYFCLIVMSPNDKNYLNVLWGKLAAEILTLNWNTALEDLTRLRDYIDSANFSTIQALQQRTWLIHWSVLVFFNHPKGRDLIIEMFLYKPLYLNAIQTMCPHIMRYLATAVVINRTRRNALKDLIKVIQQESYTYRDPITEFLECLYVNFDFEGARLKLHECQTVILNDFFIVACLNEFVEDARLMIFETFCRIHQCITISMLADKLNMKPNEAECWIVNLIRNARLNAKIDSKLGHVVMGTQPLSPYQQLVEKIDSLSMRSEHLAGLIERKSKQKNQESADSWKYY.

The region spanning 219–392 is the PCI domain; that stretch reads FFNHPKGRDL…GHVVMGTQPL (174 aa).

Belongs to the eIF-3 subunit E family. As to quaternary structure, component of the eukaryotic translation initiation factor 3 (eIF-3) complex. The eIF-3 complex interacts with pix. Interacts with mxt.

The protein resides in the cytoplasm. Its function is as follows. Component of the eukaryotic translation initiation factor 3 (eIF-3) complex, which is involved in protein synthesis of a specialized repertoire of mRNAs and, together with other initiation factors, stimulates binding of mRNA and methionyl-tRNAi to the 40S ribosome. The eIF-3 complex specifically targets and initiates translation of a subset of mRNAs involved in cell proliferation. This Drosophila grimshawi (Hawaiian fruit fly) protein is Eukaryotic translation initiation factor 3 subunit E (eIF3-S6).